Consider the following 240-residue polypeptide: Ribonuclease P protein component (240 aa).

A disordered region spans residues 1-140 (MDEKDLATQQ…KKAGGKGLVS (140 aa)). Over residues 40–51 (APPPHRVIPPHP) the composition is skewed to pro residues. The tract at residues 47–123 (IPPHPGLRQD…PGPDRDGGSK (77 aa)) is insert. Residues 122 to 132 (SKASRASSPKK) show a composition bias toward low complexity.

Belongs to the RnpA family. Consists of a catalytic RNA component (M1 or rnpB) and a protein subunit.

The catalysed reaction is Endonucleolytic cleavage of RNA, removing 5'-extranucleotides from tRNA precursor.. Its function is as follows. RNaseP catalyzes the removal of the 5'-leader sequence from pre-tRNA to produce the mature 5'-terminus. It can also cleave other RNA substrates such as 4.5S RNA. The protein component plays an auxiliary but essential role in vivo by binding to the 5'-leader sequence and broadening the substrate specificity of the ribozyme. The polypeptide is Ribonuclease P protein component (Thermus filiformis).